The chain runs to 181 residues: Adenine phosphoribosyltransferase (181 aa).

The protein belongs to the purine/pyrimidine phosphoribosyltransferase family. In terms of assembly, homodimer.

It localises to the cytoplasm. The enzyme catalyses AMP + diphosphate = 5-phospho-alpha-D-ribose 1-diphosphate + adenine. It functions in the pathway purine metabolism; AMP biosynthesis via salvage pathway; AMP from adenine: step 1/1. Its function is as follows. Catalyzes a salvage reaction resulting in the formation of AMP, that is energically less costly than de novo synthesis. The protein is Adenine phosphoribosyltransferase of Shewanella amazonensis (strain ATCC BAA-1098 / SB2B).